Consider the following 218-residue polypeptide: MYLFHLCLVFACVPCPTFQASKLCLGWLWGMDIDPYKEFGSSYQLLNFLPLDFFPDLNALVDTATALYEEELTGREHCSPHHTAIRQALVCWDELTKLIAWMSSNITSEQVRTIIVNHVNDTWGLKVRQSLWFHLSCLTFGQHTVQEFLVSFGVWIRTPAPYRPPNAPILSTLPEHTVIRRRGGARASRSPRRRTPSPRRRRSQSPRRRRSQSPSANC.

Positions 1 to 19 (MYLFHLCLVFACVPCPTFQ) are cleaved as a signal peptide. The HBEAG stretch occupies residues 26 to 28 (GWL). Residues 180–211 (RRRGGARASRSPRRRTPSPRRRRSQSPRRRRS) are compositionally biased toward basic residues. The tract at residues 180–218 (RRRGGARASRSPRRRTPSPRRRRSQSPRRRRSQSPSANC) is disordered. The 1; half-length repeat unit spans residues 190 to 196 (SPRRRTP). The segment at 190 to 212 (SPRRRTPSPRRRRSQSPRRRRSQ) is 3 X 8 AA repeats of S-P-R-R-R-R-S-Q. The propeptide occupies 190 to 218 (SPRRRTPSPRRRRSQSPRRRRSQSPSANC). 2 tandem repeats follow at residues 197 to 204 (SPRRRRSQ) and 205 to 212 (SPRRRRSQ).

It belongs to the orthohepadnavirus precore antigen family. In terms of assembly, homodimerizes. Phosphorylated. Post-translationally, cleaved by host furin.

Its subcellular location is the secreted. The protein localises to the host nucleus. Functionally, may regulate immune response to the intracellular capsid in acting as a T-cell tolerogen, by having an immunoregulatory effect which prevents destruction of infected cells by cytotoxic T-cells. This immune regulation may predispose to chronicity during perinatal infections and prevent severe liver injury during adult infections. In Marmota monax (Woodchuck), this protein is External core antigen.